Reading from the N-terminus, the 803-residue chain is Homeobox protein Wariai (803 aa).

Over residues 23 to 41 the composition is skewed to polar residues; the sequence is SDYDSYEQQYNNPTGSKQY. Residues 23–144 form a disordered region; sequence SDYDSYEQQY…PTPYSSNSFS (122 aa). A compositionally biased stretch (low complexity) spans 42–124; the sequence is NNNNNNNTNT…NNNNNNNNNN (83 aa). Residues 125–138 show a composition bias toward polar residues; it reads QHLSQSQQLSPTPY. Residues 162–221 constitute a DNA-binding region (homeobox); it reads SKKKRKRTSPDQLKLLEKIFMAHQHPNLNLRSQLAVELHMTARSVQIWFQNRRAKARNME. A disordered region spans residues 288–330; sequence INGNMGGGGGGGGGSHNHHHHNHNHNHHNHNHNHNHNQPLSNG. Over residues 291–302 the composition is skewed to gly residues; that stretch reads NMGGGGGGGGGS. Residues 303–322 show a composition bias toward basic residues; sequence HNHHHHNHNHNHHNHNHNHN. ANK repeat units follow at residues 374 to 403, 407 to 436, 440 to 469, 474 to 503, 507 to 536, 540 to 569, 573 to 602, 606 to 636, and 642 to 671; these read KGLS…NPNI, QGNT…DPNL, EGVS…EVSV, NGET…KASV, NNRT…DMNA, DGHT…DPNI, EGYT…KLNI, NGQN…EIAA, and QGYT…SKKI. Positions 695-760 are disordered; sequence KSSNNNNSNS…PPGNKFEEDD (66 aa). Residues 696 to 746 show a composition bias toward low complexity; the sequence is SSNNNNSNSNINNINNINNINNINSQPNTNSDNNNNNNNNNFNENYSNGNN.

The protein localises to the nucleus. In terms of biological role, putative transcription factor, that seems to be involved in anterior-posterior patterning of the slug, probably by controlling the proportions of prestalk and prespore cells. This is Homeobox protein Wariai (warA) from Dictyostelium discoideum (Social amoeba).